The primary structure comprises 556 residues: Formate--tetrahydrofolate ligase (556 aa).

65–72 is an ATP binding site; the sequence is TPAGEGKS.

It belongs to the formate--tetrahydrofolate ligase family.

The catalysed reaction is (6S)-5,6,7,8-tetrahydrofolate + formate + ATP = (6R)-10-formyltetrahydrofolate + ADP + phosphate. The protein operates within one-carbon metabolism; tetrahydrofolate interconversion. The protein is Formate--tetrahydrofolate ligase of Clostridium perfringens (strain SM101 / Type A).